Consider the following 1691-residue polypeptide: Collagen alpha-6(IV) chain (1691 aa).

The signal sequence occupies residues 1–22 (MLINKLWLLLVTLCLTEELAAA). The segment at 23-46 (GEKSYGKPCGGQDCSGSCQCFPEK) is 7S domain. A triple-helical region region spans residues 47–1463 (GARGRPGPIG…FGMPGMPGQS (1417 aa)). 5 disordered regions span residues 108–338 (IPGH…EGQK), 404–473 (GFPG…LGLK), 486–881 (GGVP…KGSP), 915–1099 (GIPG…KGRD), and 1185–1459 (THGT…MPGM). N-linked (GlcNAc...) asparagine glycosylation is present at asparagine 127. Positions 185–197 (PQGAPGFPGAVGP) are enriched in low complexity. The span at 198 to 213 (AGPPGLQGPPGPPGPL) shows a compositional bias: pro residues. Low complexity-rich tracts occupy residues 311–320 (QGPPGQQGKK) and 421–431 (GAAGLPGRDGL). Pro residues-rich tracts occupy residues 432–443 (PGPPGPPGPPSP) and 491–502 (TGPPGEPGPPGP). Positions 503–512 (WGLIGLPGLK) are enriched in low complexity. The Cell attachment site signature appears at 515–517 (RGD). Positions 526 to 541 (PAGAPGLVGPLGPSGP) are enriched in low complexity. A Cell attachment site motif is present at residues 560-562 (RGD). The segment covering 588–599 (GLPGDGGQGFPG) has biased composition (gly residues). Composition is skewed to low complexity over residues 641-652 (LPGQQGLPGSKG), 660-703 (PGSY…GSPG), 722-735 (LPGF…DGLP), and 802-820 (SPGT…SSGP). Positions 842 to 851 (PGKKGTRGKK) are enriched in basic residues. The span at 853–878 (PPGSIVKKGLPGLKGLPGNPGLVGLK) shows a compositional bias: low complexity. Positions 986–988 (RGD) match the Cell attachment site motif. Low complexity predominate over residues 1055-1068 (SPGLPGASGLPGLK). The segment covering 1210–1220 (GYPGIGIGAPG) has biased composition (gly residues). The segment covering 1234–1253 (PGLQGPAGLPGAPGISLPSL) has biased composition (low complexity). Positions 1275 to 1284 (PAGPPGPPGP) are enriched in pro residues. A compositionally biased stretch (polar residues) spans 1360 to 1371 (SGLQGDPGQTPT). 2 stretches are compositionally biased toward low complexity: residues 1384–1397 (LPGI…TGDP) and 1429–1459 (ALGD…MPGM). Residues 1467 to 1691 (GYTLVKHSQS…SRCQVCMKSL (225 aa)) form the Collagen IV NC1 domain. Disulfide bonds link cysteine 1482-cysteine 1571, cysteine 1515-cysteine 1568, cysteine 1527-cysteine 1533, cysteine 1590-cysteine 1687, cysteine 1624-cysteine 1684, and cysteine 1636-cysteine 1643.

This sequence belongs to the type IV collagen family. There are six type IV collagen isoforms, alpha 1(IV)-alpha 6(IV), each of which can form a triple helix structure with 2 other chains to generate type IV collagen network. Prolines at the third position of the tripeptide repeating unit (G-X-Y) are hydroxylated in some or all of the chains. In terms of processing, type IV collagens contain numerous cysteine residues which are involved in inter- and intramolecular disulfide bonding. 12 of these, located in the NC1 domain, are conserved in all known type IV collagens. Post-translationally, the trimeric structure of the NC1 domains is stabilized by covalent bonds between Lys and Met residues.

The protein localises to the secreted. The protein resides in the extracellular space. Its subcellular location is the extracellular matrix. It localises to the basement membrane. Functionally, type IV collagen is the major structural component of glomerular basement membranes (GBM), forming a 'chicken-wire' meshwork together with laminins, proteoglycans and entactin/nidogen. The protein is Collagen alpha-6(IV) chain (COL4A6) of Homo sapiens (Human).